The chain runs to 728 residues: Phosphoribosylformylglycinamidine synthase subunit PurL (728 aa).

The active site involves His42. ATP is bound by residues Tyr45 and Lys84. Glu86 is a binding site for Mg(2+). Residues 87–90 and Arg109 each bind substrate; that span reads SHNH. Catalysis depends on His88, which acts as the Proton acceptor. Asp110 lines the Mg(2+) pocket. A substrate-binding site is contributed by Gln237. Asp265 is a Mg(2+) binding site. 309–311 lines the substrate pocket; sequence ESQ. ATP-binding residues include Asp491 and Gly528. Position 529 (Asn529) interacts with Mg(2+). Ser531 lines the substrate pocket.

This sequence belongs to the FGAMS family. Monomer. Part of the FGAM synthase complex composed of 1 PurL, 1 PurQ and 2 PurS subunits.

It localises to the cytoplasm. It catalyses the reaction N(2)-formyl-N(1)-(5-phospho-beta-D-ribosyl)glycinamide + L-glutamine + ATP + H2O = 2-formamido-N(1)-(5-O-phospho-beta-D-ribosyl)acetamidine + L-glutamate + ADP + phosphate + H(+). It functions in the pathway purine metabolism; IMP biosynthesis via de novo pathway; 5-amino-1-(5-phospho-D-ribosyl)imidazole from N(2)-formyl-N(1)-(5-phospho-D-ribosyl)glycinamide: step 1/2. Functionally, part of the phosphoribosylformylglycinamidine synthase complex involved in the purines biosynthetic pathway. Catalyzes the ATP-dependent conversion of formylglycinamide ribonucleotide (FGAR) and glutamine to yield formylglycinamidine ribonucleotide (FGAM) and glutamate. The FGAM synthase complex is composed of three subunits. PurQ produces an ammonia molecule by converting glutamine to glutamate. PurL transfers the ammonia molecule to FGAR to form FGAM in an ATP-dependent manner. PurS interacts with PurQ and PurL and is thought to assist in the transfer of the ammonia molecule from PurQ to PurL. This chain is Phosphoribosylformylglycinamidine synthase subunit PurL, found in Campylobacter jejuni (strain RM1221).